The primary structure comprises 393 residues: MKRPVTGKDLMIVNMGPHHPSMHGVLRLIVTLDGEDVVDCEPILGYLHRGMEKIAENRAIIQYLPYVTRWDYLATMFTEAITVNGPEQLGNIQVPKRASYIRVIMLELSRIASHLLWLGPFMADIGAQTPFFYIFREREFVYDLFEAATGMRMMHNFFRIGGIAADLPYGWIDKCLDFCDYFLTEVVEYQKLITRNPIFLERVEGVGIIGGEEAINWGLSGPMLRASGIPWDLRKVDRYESYDEFEWEIQWQKQGDSLARYLVRLSEMTESIKIIQQALEGLPGGPYENLESRGFDRKRNPEWNDFEYRFISKKPSPTFELSKQELYVRVEAPKGELGIFLIGDQSGFPWRWKIRPPGFINLQILPELVKRMKLADIMTILGSIDIIMGEVDR.

Belongs to the complex I 49 kDa subunit family. As to quaternary structure, NDH is composed of at least 16 different subunits, 5 of which are encoded in the nucleus.

It is found in the plastid. The protein localises to the chloroplast thylakoid membrane. The enzyme catalyses a plastoquinone + NADH + (n+1) H(+)(in) = a plastoquinol + NAD(+) + n H(+)(out). It carries out the reaction a plastoquinone + NADPH + (n+1) H(+)(in) = a plastoquinol + NADP(+) + n H(+)(out). Its function is as follows. NDH shuttles electrons from NAD(P)H:plastoquinone, via FMN and iron-sulfur (Fe-S) centers, to quinones in the photosynthetic chain and possibly in a chloroplast respiratory chain. The immediate electron acceptor for the enzyme in this species is believed to be plastoquinone. Couples the redox reaction to proton translocation, and thus conserves the redox energy in a proton gradient. This chain is NAD(P)H-quinone oxidoreductase subunit H, chloroplastic, found in Nasturtium officinale (Watercress).